Here is an 884-residue protein sequence, read N- to C-terminus: Microsomal triglyceride transfer protein large subunit (884 aa).

An N-terminal signal peptide occupies residues 1–21 (MMPVAGLLLCVTAVLCTSALG). In terms of domain architecture, Vitellogenin spans 26–660 (LDNGKLYRYS…QSNNALLHGL (635 aa)). Cys-172 and Cys-192 are oxidised to a cystine. N-linked (GlcNAc...) asparagine glycosylation is present at Asn-348. Cys-438 and Cys-443 are disulfide-bonded. N-linked (GlcNAc...) asparagine glycosylation occurs at Asn-787.

Heterodimer; heterodimerizes with the protein disulfide isomerase. As to expression, highest expression in the proximal part of the anterior intestine. Lower expression in the distal part of the anterior intestine, in the posterior portion of the intestinal tube and liver. Very low expression levels in heart, brain, ovary, testis and kidney.

It localises to the endoplasmic reticulum. Its subcellular location is the golgi apparatus. The enzyme catalyses a 1,2-diacyl-sn-glycero-3-phosphocholine(in) = a 1,2-diacyl-sn-glycero-3-phosphocholine(out). It catalyses the reaction a 1,2-diacyl-sn-glycero-3-phosphoethanolamine(in) = a 1,2-diacyl-sn-glycero-3-phosphoethanolamine(out). The catalysed reaction is a cholesterol ester(in) = a cholesterol ester(out). It carries out the reaction a triacyl-sn-glycerol(in) = a triacyl-sn-glycerol(out). With respect to regulation, inhibited by naringenin. Its function is as follows. Catalyzes the transport of triglyceride between phospholipid surfaces. Catalyzes the transport of cholesteryl ester, and phospholipid between phospholipid surfaces. Required for the assembly and secretion of plasma lipoproteins that contain apolipoprotein B. Required for yolk lipid utilization and absorption of dietary lipids in larvae. The polypeptide is Microsomal triglyceride transfer protein large subunit (Danio rerio (Zebrafish)).